Here is a 262-residue protein sequence, read N- to C-terminus: Hydroxyethylthiazole kinase (262 aa).

Met50 contributes to the substrate binding site. Residues Arg125 and Thr171 each coordinate ATP. Gly198 is a substrate binding site.

Belongs to the Thz kinase family. Mg(2+) serves as cofactor.

The enzyme catalyses 5-(2-hydroxyethyl)-4-methylthiazole + ATP = 4-methyl-5-(2-phosphooxyethyl)-thiazole + ADP + H(+). It participates in cofactor biosynthesis; thiamine diphosphate biosynthesis; 4-methyl-5-(2-phosphoethyl)-thiazole from 5-(2-hydroxyethyl)-4-methylthiazole: step 1/1. In terms of biological role, catalyzes the phosphorylation of the hydroxyl group of 4-methyl-5-beta-hydroxyethylthiazole (THZ). The sequence is that of Hydroxyethylthiazole kinase from Escherichia coli O45:K1 (strain S88 / ExPEC).